Consider the following 449-residue polypeptide: Metacaspase-1 (449 aa).

The interval methionine 1–serine 132 is disordered. Residues tyrosine 10–proline 26 show a composition bias toward low complexity. Residues proline 27 to glutamine 55 show a composition bias toward pro residues. The span at asparagine 56 to threonine 66 shows a compositional bias: polar residues. Composition is skewed to low complexity over residues glutamine 67–proline 91 and glutamine 98–proline 112. Residues glycine 119–serine 132 are compositionally biased toward polar residues. Active-site residues include histidine 232 and cysteine 293.

Belongs to the peptidase C14B family.

Involved in cell death (apoptosis). The protein is Metacaspase-1 (MCA1) of Lodderomyces elongisporus (strain ATCC 11503 / CBS 2605 / JCM 1781 / NBRC 1676 / NRRL YB-4239) (Yeast).